A 77-amino-acid chain; its full sequence is DNA-directed RNA polymerase subunit epsilon (77 aa).

Belongs to the RNA polymerase subunit epsilon family. In terms of assembly, RNAP is composed of a core of 2 alpha, a beta and a beta' subunit. The core is associated with a delta subunit, and at least one of epsilon or omega. When a sigma factor is associated with the core the holoenzyme is formed, which can initiate transcription.

It carries out the reaction RNA(n) + a ribonucleoside 5'-triphosphate = RNA(n+1) + diphosphate. In terms of biological role, a non-essential component of RNA polymerase (RNAP). The polypeptide is DNA-directed RNA polymerase subunit epsilon (Streptococcus pneumoniae (strain P1031)).